The primary structure comprises 165 residues: Protein SprT (165 aa).

In terms of domain architecture, SprT-like spans 20–163; sequence EKLAQANLKL…RCVHCGEQLV (144 aa). H78 is a binding site for Zn(2+). The active site involves E79. H82 contributes to the Zn(2+) binding site.

This sequence belongs to the SprT family. It depends on Zn(2+) as a cofactor.

The protein resides in the cytoplasm. This is Protein SprT from Shigella flexneri serotype 5b (strain 8401).